The sequence spans 86 residues: Molybdopterin synthase sulfur carrier subunit (86 aa).

Gly-86 is modified (1-thioglycine; alternate). Gly-86 is modified (glycyl adenylate; alternate).

The protein belongs to the MoaD family. MOCS2A subfamily. In terms of assembly, heterotetramer; composed of 2 small (mocs2s) and 2 large (mocs2l) subunits. C-terminal thiocarboxylation occurs in 2 steps, it is first acyl-adenylated (-COAMP) via the hesA/moeB/thiF part of mocs3, then thiocarboxylated (-COSH) via the rhodanese domain of mocs3.

It localises to the cytoplasm. Its pathway is cofactor biosynthesis; molybdopterin biosynthesis. Its function is as follows. Acts as a sulfur carrier required for molybdopterin biosynthesis. Component of the molybdopterin synthase complex that catalyzes the conversion of precursor Z into molybdopterin by mediating the incorporation of 2 sulfur atoms into precursor Z to generate a dithiolene group. In the complex, serves as sulfur donor by being thiocarboxylated (-COSH) at its C-terminus by mocs3. After interaction with mocs2l, the sulfur is then transferred to precursor Z to form molybdopterin. This chain is Molybdopterin synthase sulfur carrier subunit (mocs2s), found in Dictyostelium discoideum (Social amoeba).